Here is a 480-residue protein sequence, read N- to C-terminus: Glycogen synthase 1 (480 aa).

K15 contacts ADP-alpha-D-glucose.

The protein belongs to the glycosyltransferase 1 family. Bacterial/plant glycogen synthase subfamily.

It carries out the reaction [(1-&gt;4)-alpha-D-glucosyl](n) + ADP-alpha-D-glucose = [(1-&gt;4)-alpha-D-glucosyl](n+1) + ADP + H(+). The protein operates within glycan biosynthesis; glycogen biosynthesis. In terms of biological role, synthesizes alpha-1,4-glucan chains using ADP-glucose. This chain is Glycogen synthase 1 (glgA1), found in Rhizobium radiobacter (Agrobacterium tumefaciens).